The primary structure comprises 528 residues: Probable feruloyl esterase B-1 (528 aa).

The signal sequence occupies residues 1-19; sequence MMWWFLLIGLASAAATASS. 6 cysteine pairs are disulfide-bonded: C29–C78, C64–C117, C190–C445, C259–C276, C285–C295, and C505–C527. N-linked (GlcNAc...) asparagine glycosylation is found at N83 and N101. Residue S191 is the Acyl-ester intermediate of the active site. D260, D263, A265, D267, and I269 together coordinate Ca(2+). N-linked (GlcNAc...) asparagine glycans are attached at residues N286, N354, and N385. Catalysis depends on charge relay system residues D404 and H444.

Belongs to the tannase family.

Its subcellular location is the secreted. It carries out the reaction feruloyl-polysaccharide + H2O = ferulate + polysaccharide.. Involved in degradation of plant cell walls. Hydrolyzes the feruloyl-arabinose ester bond in arabinoxylans as well as the feruloyl-galactose and feruloyl-arabinose ester bonds in pectin. This chain is Probable feruloyl esterase B-1 (faeB-1), found in Aspergillus fumigatus (strain ATCC MYA-4609 / CBS 101355 / FGSC A1100 / Af293) (Neosartorya fumigata).